The primary structure comprises 227 residues: Ribonuclease 3 (227 aa).

One can recognise an RNase III domain in the interval L4–G126. E39 is a binding site for Mg(2+). The active site involves D43. Mg(2+) contacts are provided by D112 and E115. Residue E115 is part of the active site. The DRBM domain maps to D153–I226.

The protein belongs to the ribonuclease III family. As to quaternary structure, homodimer. Mg(2+) serves as cofactor.

The protein resides in the cytoplasm. The catalysed reaction is Endonucleolytic cleavage to 5'-phosphomonoester.. In terms of biological role, digests double-stranded RNA. Involved in the processing of primary rRNA transcript to yield the immediate precursors to the large and small rRNAs (23S and 16S). Processes some mRNAs, and tRNAs when they are encoded in the rRNA operon. Processes pre-crRNA and tracrRNA of type II CRISPR loci if present in the organism. The sequence is that of Ribonuclease 3 from Haemophilus influenzae (strain 86-028NP).